Consider the following 271-residue polypeptide: Thymidine kinase (271 aa).

ATP is bound by residues 74-81 (GPMFAGKT) and 152-155 (DEAQ). The Proton acceptor role is filled by glutamate 153. Tyrosine 184 contacts substrate. Zn(2+) is bound by residues cysteine 209 and cysteine 212. Tyrosine 237 provides a ligand contact to substrate. Cysteine 241 is a binding site for Zn(2+).

The protein belongs to the thymidine kinase family.

It carries out the reaction thymidine + ATP = dTMP + ADP + H(+). The polypeptide is Thymidine kinase (TK) (Oryza sativa subsp. japonica (Rice)).